The chain runs to 266 residues: Putative expansin-A30 (266 aa).

The signal sequence occupies residues 1-24 (MAAASSTTATTAILAAVIISLAGA). An Expansin-like EG45 domain is found at 55-170 (GGACGYGNLY…RRVPCARAGG (116 aa)). Positions 180 to 261 (YWLLAYVMNV…SWCFGLTYQA (82 aa)) constitute an Expansin-like CBD domain.

It belongs to the expansin family. Expansin A subfamily.

The protein resides in the secreted. It localises to the cell wall. Its subcellular location is the membrane. May cause loosening and extension of plant cell walls by disrupting non-covalent bonding between cellulose microfibrils and matrix glucans. No enzymatic activity has been found. May be required for rapid internodal elongation in deepwater rice during submergence. The chain is Putative expansin-A30 (EXPA30) from Oryza sativa subsp. japonica (Rice).